Here is a 185-residue protein sequence, read N- to C-terminus: ATP synthase subunit b 2 (185 aa).

A disordered region spans residues 1–25 (MAESHGNAHGATAHTEADGGHKAPF). Residues 34 to 56 (ASQLVSLTIAFVALYLISSRLAL) form a helical membrane-spanning segment.

This sequence belongs to the ATPase B chain family. As to quaternary structure, F-type ATPases have 2 components, F(1) - the catalytic core - and F(0) - the membrane proton channel. F(1) has five subunits: alpha(3), beta(3), gamma(1), delta(1), epsilon(1). F(0) has three main subunits: a(1), b(2) and c(10-14). The alpha and beta chains form an alternating ring which encloses part of the gamma chain. F(1) is attached to F(0) by a central stalk formed by the gamma and epsilon chains, while a peripheral stalk is formed by the delta and b chains.

The protein resides in the cell inner membrane. Its function is as follows. F(1)F(0) ATP synthase produces ATP from ADP in the presence of a proton or sodium gradient. F-type ATPases consist of two structural domains, F(1) containing the extramembraneous catalytic core and F(0) containing the membrane proton channel, linked together by a central stalk and a peripheral stalk. During catalysis, ATP synthesis in the catalytic domain of F(1) is coupled via a rotary mechanism of the central stalk subunits to proton translocation. In terms of biological role, component of the F(0) channel, it forms part of the peripheral stalk, linking F(1) to F(0). The b'-subunit is a diverged and duplicated form of b found in plants and photosynthetic bacteria. In Nitrobacter winogradskyi (strain ATCC 25391 / DSM 10237 / CIP 104748 / NCIMB 11846 / Nb-255), this protein is ATP synthase subunit b 2 (atpF2).